Reading from the N-terminus, the 233-residue chain is Ribonuclease HII (233 aa).

Positions 21–211 (KVIAGVDEVG…LDALPQWRHL (191 aa)) constitute an RNase H type-2 domain. 3 residues coordinate a divalent metal cation: Asp27, Glu28, and Asp119.

It belongs to the RNase HII family. Mn(2+) is required as a cofactor. It depends on Mg(2+) as a cofactor.

It is found in the cytoplasm. The catalysed reaction is Endonucleolytic cleavage to 5'-phosphomonoester.. Functionally, endonuclease that specifically degrades the RNA of RNA-DNA hybrids. This is Ribonuclease HII from Streptomyces avermitilis (strain ATCC 31267 / DSM 46492 / JCM 5070 / NBRC 14893 / NCIMB 12804 / NRRL 8165 / MA-4680).